The primary structure comprises 909 residues: Myb-like protein Q (909 aa).

Disordered regions lie at residues 15-65, 84-149, and 216-280; these read TTNN…QQQQ, QQQN…QQIL, and SAPS…KGPW. The segment covering 17–46 has biased composition (low complexity); sequence NNNSNNNNNNNNNNNNNNNNNNNNNINQNH. Basic residues predominate over residues 47–56; that stretch reads QHQHQHHHHQ. Residues 84–126 are compositionally biased toward low complexity; that stretch reads QQQNYGESTTSTSMIPPSITTSLTPLTPTLSSQPQNIQQQQQQ. Residues 127 to 139 are compositionally biased toward basic residues; the sequence is QHHHQQQHHHHHQ. A compositionally biased stretch (polar residues) spans 216-226; it reads SAPSTPLSMSP. HTH myb-type domains are found at residues 272 to 327 and 328 to 378; these read SPGI…SPEV and RKTN…LKKI. DNA-binding regions (H-T-H motif) lie at residues 300–323 and 351–374; these read WSSIAAKIPGRIGKQCRERWFNHL and WTAISKMLDGRPANAIKNHWNSTL. A compositionally biased stretch (basic and acidic residues) spans 379–389; that stretch reads GGDSKSLNKEK. 5 disordered regions span residues 379–482, 497–531, 616–642, 672–748, and 826–855; these read GGDS…NTAI, QTTPNSSPSLSSKKTHDKQKVPQSPKNSKQQQTQQ, SMEQHHYQQQQQAQQQQHQQQQHQQQQ, YQQQ…HPIE, and LNTTTTTTNNNNNNNNNNNNNNNNNNIPTP. Residues 390–401 show a composition bias toward acidic residues; sequence DDDDDDDEDAED. Composition is skewed to low complexity over residues 415 to 431 and 444 to 482; these read SSSSTTTTTTTTTTNSS and STTTSTNNLNNSTNSTNSINNNNNNNNNNNNSSNTNTAI. Residues 497–508 are compositionally biased toward polar residues; the sequence is QTTPNSSPSLSS. Low complexity-rich tracts occupy residues 622–642, 672–726, 733–744, and 826–851; these read YQQQQQAQQQQHQQQQHQQQQ, YQQQ…QQQQ, NSNNTDTTFSNS, and LNTTTTTTNNNNNNNNNNNNNNNNNN.

Its subcellular location is the nucleus. The protein is Myb-like protein Q (mybQ) of Dictyostelium discoideum (Social amoeba).